The chain runs to 418 residues: Lactate dehydrogenase (NAD(+),ferredoxin) subunit LctC (418 aa).

FAD is bound by residues Arg-285, 325–328, 343–348, Asn-362, and 380–381; these read IGLS, SGAVQF, and DL.

It belongs to the ETF alpha-subunit/FixB family. Part of the stable heterotrimeric lactate dehydrogenase-Etf complex, which is formed by the lactate dehydrogenase LctD and the electron-transferring flavoprotein (Etf) alpha (LctC) and beta (LctB) subunits. FAD is required as a cofactor. Requires [4Fe-4S] cluster as cofactor.

The protein resides in the cytoplasm. It carries out the reaction lactate + 2 reduced [2Fe-2S]-[ferredoxin] + 2 NAD(+) = 2 oxidized [2Fe-2S]-[ferredoxin] + pyruvate + 2 NADH. Its activity is regulated as follows. Activity is stimulated by divalent cations. Highest stimulation is observed with Ca(2+). Functionally, the lactate dehydrogenase-Etf complex catalyzes the oxidation of lactate to pyruvate. It uses flavin-based electron confurcation to drive endergonic lactate oxidation with NAD(+) as oxidant at the expense of simultaneous exergonic electron flow from reduced ferredoxin to NAD(+). The electron transfer flavoprotein (Etf) mediates the electron transfer between the different donors and acceptors. The sequence is that of Lactate dehydrogenase (NAD(+),ferredoxin) subunit LctC from Acetobacterium woodii (strain ATCC 29683 / DSM 1030 / JCM 2381 / KCTC 1655 / WB1).